The sequence spans 160 residues: Nucleotide-binding protein VP1617 (160 aa).

This sequence belongs to the YajQ family.

Functionally, nucleotide-binding protein. This is Nucleotide-binding protein VP1617 from Vibrio parahaemolyticus serotype O3:K6 (strain RIMD 2210633).